The following is a 286-amino-acid chain: Shikimate dehydrogenase (NADP(+)) (286 aa).

Shikimate-binding positions include S20–S22 and S67. The active-site Proton acceptor is K71. N92 and D107 together coordinate shikimate. NADP(+) is bound by residues G131 to A135 and A230. Y232 serves as a coordination point for shikimate. Residue G253 participates in NADP(+) binding.

Belongs to the shikimate dehydrogenase family. In terms of assembly, homodimer.

It carries out the reaction shikimate + NADP(+) = 3-dehydroshikimate + NADPH + H(+). Its pathway is metabolic intermediate biosynthesis; chorismate biosynthesis; chorismate from D-erythrose 4-phosphate and phosphoenolpyruvate: step 4/7. In terms of biological role, involved in the biosynthesis of the chorismate, which leads to the biosynthesis of aromatic amino acids. Catalyzes the reversible NADPH linked reduction of 3-dehydroshikimate (DHSA) to yield shikimate (SA). The protein is Shikimate dehydrogenase (NADP(+)) of Lactococcus lactis subsp. cremoris (strain SK11).